Consider the following 375-residue polypeptide: NADH-ubiquinone oxidoreductase 40 kDa subunit, mitochondrial (375 aa).

Residues 1–26 (MAPLTAAMRSTPRIIVSNAFGFQRRA) constitute a mitochondrion transit peptide.

The protein belongs to the complex I NDUFA9 subunit family. Complex I is composed of about 40 different subunits. It depends on FAD as a cofactor.

It localises to the mitochondrion matrix. In terms of biological role, accessory subunit of the mitochondrial membrane respiratory chain NADH dehydrogenase (Complex I), that is believed not to be involved in catalysis. Complex I functions in the transfer of electrons from NADH to the respiratory chain. The immediate electron acceptor for the enzyme is believed to be ubiquinone. The sequence is that of NADH-ubiquinone oxidoreductase 40 kDa subunit, mitochondrial (nuo40) from Neurospora crassa (strain ATCC 24698 / 74-OR23-1A / CBS 708.71 / DSM 1257 / FGSC 987).